We begin with the raw amino-acid sequence, 268 residues long: Undecaprenyl-diphosphatase 1 (268 aa).

Helical transmembrane passes span 5 to 25, 43 to 63, 81 to 101, 107 to 127, 185 to 205, 214 to 234, and 248 to 268; these read TIVE…IPVS, GKAF…SVYF, HFVI…ALAH, VLFE…VILL, AEFS…FDLF, ADLP…LFVV, and LFGW…MIWG.

The protein belongs to the UppP family.

It localises to the cell inner membrane. It carries out the reaction di-trans,octa-cis-undecaprenyl diphosphate + H2O = di-trans,octa-cis-undecaprenyl phosphate + phosphate + H(+). Catalyzes the dephosphorylation of undecaprenyl diphosphate (UPP). Confers resistance to bacitracin. The polypeptide is Undecaprenyl-diphosphatase 1 (Mesorhizobium japonicum (strain LMG 29417 / CECT 9101 / MAFF 303099) (Mesorhizobium loti (strain MAFF 303099))).